Consider the following 560-residue polypeptide: Putative transport protein VIBHAR_02636 (560 aa).

The next 5 helical transmembrane spans lie at 8–28 (LLEQ…LAFG), 37–57 (LGNS…GFSF), 66–86 (FMLF…GIFF), 91–111 (HYFI…YFCS), and 164–184 (VGYA…AKLL). 2 RCK C-terminal domains span residues 205–292 (LGNS…FRNG) and 293–376 (KEVF…KIGF). 6 consecutive transmembrane segments (helical) span residues 386 to 406 (LLAF…TMTF), 409 to 429 (VSFS…LGFL), 450 to 470 (LGLM…IFEH), 478 to 498 (IIGL…LVGA), 505 to 525 (SALL…MDVV), and 539 to 559 (AGTY…LIIL).

This sequence belongs to the AAE transporter (TC 2.A.81) family. YbjL subfamily.

The protein resides in the cell membrane. This chain is Putative transport protein VIBHAR_02636, found in Vibrio campbellii (strain ATCC BAA-1116).